The following is a 370-amino-acid chain: Flagellar P-ring protein (370 aa).

The signal sequence occupies residues 1–24; that stretch reads MTLSKWILSFGLSVCLIVSHPVSA.

The protein belongs to the FlgI family. In terms of assembly, the basal body constitutes a major portion of the flagellar organelle and consists of four rings (L,P,S, and M) mounted on a central rod.

The protein resides in the periplasm. Its subcellular location is the bacterial flagellum basal body. In terms of biological role, assembles around the rod to form the L-ring and probably protects the motor/basal body from shearing forces during rotation. The protein is Flagellar P-ring protein of Nitrosomonas europaea (strain ATCC 19718 / CIP 103999 / KCTC 2705 / NBRC 14298).